The sequence spans 331 residues: Bifunctional nuclease 1 (331 aa).

Residues 126–261 (CVQNNPRVLR…RIAYNNGLKV (136 aa)) form the BFN domain. Residues 291–326 (EAQEFDLVRNMLVAAVEERYKDAAQYRDQLFMFRAK) form the UVR domain.

It belongs to the bifunctional nuclease family.

The protein resides in the nucleus. In terms of biological role, bifunctional nuclease with both RNase and DNase activities. Involved in basal defense response. Participates in abscisic acid-derived callose deposition following infection by a necrotrophic pathogen. The sequence is that of Bifunctional nuclease 1 (BBD1) from Oryza sativa subsp. indica (Rice).